We begin with the raw amino-acid sequence, 500 residues long: NAD(P)H-quinone oxidoreductase chain 4, chloroplastic (500 aa).

The next 14 membrane-spanning stretches (helical) occupy residues 4-24 (FPWLTIFVVLPISGGSLIFLF), 31-51 (VIKWYTIFICIFELLLMTYAF), 84-104 (GFSLGPILLTGFITTLATLAA), 111-129 (SRLFHFLMLAMYSGQIGLF), 134-154 (LLLFFIMWELELIPVYLLLSM), 167-187 (FILYTAGGSVFLLMGALGIAL), 208-228 (ALEIFFYIGFLIAFAVKSPII), 242-262 (HYSTCMLLAGILLKMGAYGLV), 272-292 (AHSIFSPWLIIVGVMQIIYAA), 305-325 (IAYSSVSHMGFIIIGICSISD), 330-350 (GAILQIISHGFIGAALFFLAG), 386-406 (LALPGMSGFFAELIVFFGIIT), 416-436 (ILITFVMAVGMILTPIYLLSM), and 463-483 (FVSISILLPVIGIGFYPDFVF).

It belongs to the complex I subunit 4 family.

The protein localises to the plastid. The protein resides in the chloroplast thylakoid membrane. The catalysed reaction is a plastoquinone + NADH + (n+1) H(+)(in) = a plastoquinol + NAD(+) + n H(+)(out). It carries out the reaction a plastoquinone + NADPH + (n+1) H(+)(in) = a plastoquinol + NADP(+) + n H(+)(out). The chain is NAD(P)H-quinone oxidoreductase chain 4, chloroplastic from Manihot esculenta (Cassava).